The following is a 398-amino-acid chain: cAMP-dependent protein kinase type 3 (398 aa).

Residues serine 15 and serine 55 each carry the phosphoserine modification. Residues 88 to 342 (FQILRTLGTG…SEDVKNHPWF (255 aa)) enclose the Protein kinase domain. Residues 94–102 (LGTGSFGRV) and lysine 117 contribute to the ATP site. Aspartate 211 (proton acceptor) is an active-site residue. In terms of domain architecture, AGC-kinase C-terminal spans 343 to 398 (NEVIWEKLLARYIETPYEPPIQQGQGDTSQFDRYPEEEFNYGIQGEDPYMDLMKEF).

The protein belongs to the protein kinase superfamily. AGC Ser/Thr protein kinase family. cAMP subfamily.

It carries out the reaction L-seryl-[protein] + ATP = O-phospho-L-seryl-[protein] + ADP + H(+). The enzyme catalyses L-threonyl-[protein] + ATP = O-phospho-L-threonyl-[protein] + ADP + H(+). Its activity is regulated as follows. Activated by cAMP. The chain is cAMP-dependent protein kinase type 3 (TPK3) from Saccharomyces cerevisiae (strain ATCC 204508 / S288c) (Baker's yeast).